The primary structure comprises 318 residues: tRNA dimethylallyltransferase (318 aa).

Glycine 9–threonine 16 contacts ATP. Substrate is bound at residue threonine 11–threonine 16. 2 interaction with substrate tRNA regions span residues aspartate 34–glutamine 37 and glutamine 158–arginine 162.

It belongs to the IPP transferase family. As to quaternary structure, monomer. Mg(2+) is required as a cofactor.

The enzyme catalyses adenosine(37) in tRNA + dimethylallyl diphosphate = N(6)-dimethylallyladenosine(37) in tRNA + diphosphate. Catalyzes the transfer of a dimethylallyl group onto the adenine at position 37 in tRNAs that read codons beginning with uridine, leading to the formation of N6-(dimethylallyl)adenosine (i(6)A). The polypeptide is tRNA dimethylallyltransferase (Dichelobacter nodosus (strain VCS1703A)).